The sequence spans 86 residues: Neurotoxin 3FTx-RK (86 aa).

The N-terminal stretch at 1 to 21 (MKTLLLTLVVVTIVCLELGYT) is a signal peptide. 4 disulfide bridges follow: Cys24–Cys45, Cys38–Cys63, Cys67–Cys78, and Cys79–Cys84.

Expressed by the venom gland.

It is found in the secreted. This chain is Neurotoxin 3FTx-RK, found in Bungarus fasciatus (Banded krait).